Consider the following 124-residue polypeptide: Secretion system apparatus protein SsaP (124 aa).

The chain is Secretion system apparatus protein SsaP (ssaP) from Salmonella typhi.